The chain runs to 286 residues: Probable endonuclease 4 (286 aa).

Zn(2+) contacts are provided by H72, H112, E147, D181, H184, H215, D228, H230, and E260.

The protein belongs to the AP endonuclease 2 family. It depends on Zn(2+) as a cofactor.

It carries out the reaction Endonucleolytic cleavage to 5'-phosphooligonucleotide end-products.. Its function is as follows. Endonuclease IV plays a role in DNA repair. It cleaves phosphodiester bonds at apurinic or apyrimidinic (AP) sites, generating a 3'-hydroxyl group and a 5'-terminal sugar phosphate. This Mycoplasma pneumoniae (strain ATCC 29342 / M129 / Subtype 1) (Mycoplasmoides pneumoniae) protein is Probable endonuclease 4.